The chain runs to 689 residues: Long-chain fatty acid transport protein 5 (689 aa).

Residues 1–29 are Cytoplasmic-facing; the sequence is MGIWKKLTLLLLLLLLVGLGQPPWPAAMA. Helical transmembrane passes span 30–50 and 55–75; these read LALR…LALL and ISSW…LFLL. Residues 76–689 lie on the Cytoplasmic side of the membrane; that stretch reads PLQPPPGLRW…QAVCEGTWNL (614 aa). An AMP-binding site is contributed by 292–303; it reads IFTSGTTGLPKP.

It belongs to the ATP-dependent AMP-binding enzyme family. As to expression, liver-specific (at protein level). In liver expressed in a periportal distribution.

The protein resides in the endoplasmic reticulum membrane. The protein localises to the microsome. It is found in the cell membrane. The enzyme catalyses a fatty acid(in) = a fatty acid(out). The catalysed reaction is cholate + ATP + CoA = choloyl-CoA + AMP + diphosphate. It carries out the reaction (25R)-3alpha,7alpha,12alpha-trihydroxy-5beta-cholestan-26-oate + ATP + CoA = (25R)-3alpha,7alpha,12alpha-trihydroxy-5beta-cholestan-26-oyl-CoA + AMP + diphosphate. It catalyses the reaction chenodeoxycholate + ATP + CoA = chenodeoxycholoyl-CoA + AMP + diphosphate. The enzyme catalyses deoxycholate + ATP + CoA = deoxycholoyl-CoA + AMP + diphosphate. The catalysed reaction is lithocholate + ATP + CoA = lithocholoyl-CoA + AMP + diphosphate. It carries out the reaction a very long-chain fatty acid + ATP + CoA = a very long-chain fatty acyl-CoA + AMP + diphosphate. It catalyses the reaction tetracosanoate + ATP + CoA = tetracosanoyl-CoA + AMP + diphosphate. The enzyme catalyses hexacosanoate + ATP + CoA = hexacosanoyl-CoA + AMP + diphosphate. The catalysed reaction is a long-chain fatty acid + ATP + CoA = a long-chain fatty acyl-CoA + AMP + diphosphate. It carries out the reaction octadecanoate + ATP + CoA = octadecanoyl-CoA + AMP + diphosphate. It catalyses the reaction eicosanoate + ATP + CoA = eicosanoyl-CoA + AMP + diphosphate. In terms of biological role, mediates the import of long-chain fatty acids (LCFA) by facilitating their transport across cell membranes. Also catalyzes the ATP-dependent formation of fatty acyl-CoA using LCFA and very-long-chain fatty acids (VLCFA) as substrates. Mainly functions as a bile acyl-CoA synthetase catalyzing the activation of bile acids via ATP-dependent formation of bile acid CoA thioesters which is necessary for their subsequent conjugation with glycine or taurine. Both primary bile acids (cholic acid and chenodeoxycholic acid) and secondary bile acids (deoxycholic acid and lithocholic acid) are the principal substrates. In vitro, activates 3-alpha,7-alpha,12-alpha-trihydroxy-5-beta-cholestanate ((25R)-3alpha,7alpha,12alpha-trihydroxy-5beta-cholestan-26-oate or THCA), the C27 precursor of cholic acid deriving from the de novo synthesis from cholesterol. Plays an important role in hepatic fatty acid uptake and bile acid reconjugation and recycling but not in de novo synthesis of bile acids. The protein is Long-chain fatty acid transport protein 5 (Slc27a5) of Mus musculus (Mouse).